The sequence spans 584 residues: Long-chain-fatty-acid--AMP ligase FadD26 (584 aa).

Belongs to the ATP-dependent AMP-binding enzyme family.

It carries out the reaction holo-[(phenol)carboxyphthiodiolenone synthase] + a long-chain fatty acid + ATP = a long-chain fatty acyl-[(phenol)carboxyphthiodiolenone synthase] + AMP + diphosphate. It catalyses the reaction eicosanoate + holo-[(phenol)carboxyphthiodiolenone synthase] + ATP = icosanoyl-[(phenol)carboxyphthiodiolenone synthase] + AMP + diphosphate. The catalysed reaction is holo-[(phenol)carboxyphthiodiolenone synthase] + docosanoate + ATP = docosanoyl-[(phenol)carboxyphthiodiolenone synthase] + AMP + diphosphate. It functions in the pathway lipid metabolism; fatty acid biosynthesis. Catalyzes the activation of long-chain fatty acids as acyl-adenylates (acyl-AMP), which are then transferred to the multifunctional polyketide synthase PpsA for further chain extension. Catalyzes the adenylation of the long-chain fatty acids eicosanoate (C20) or docosanoate (C22), and potentially the very-long-chain fatty acid lignocerate (C24). Involved in the biosynthesis of phthiocerol dimycocerosate (DIM A) and phthiodiolone dimycocerosate (DIM B). This Mycobacterium marinum (strain ATCC BAA-535 / M) protein is Long-chain-fatty-acid--AMP ligase FadD26.